The following is a 166-amino-acid chain: Ribosome maturation factor RimM (166 aa).

A PRC barrel domain is found at 91-163 (EDEFYEFQLI…KMQITPPEGW (73 aa)).

This sequence belongs to the RimM family. As to quaternary structure, binds ribosomal protein uS19.

It localises to the cytoplasm. Its function is as follows. An accessory protein needed during the final step in the assembly of 30S ribosomal subunit, possibly for assembly of the head region. Essential for efficient processing of 16S rRNA. May be needed both before and after RbfA during the maturation of 16S rRNA. It has affinity for free ribosomal 30S subunits but not for 70S ribosomes. This chain is Ribosome maturation factor RimM, found in Sulfurihydrogenibium sp. (strain YO3AOP1).